The sequence spans 585 residues: Optineurin (585 aa).

Residues 1–32 (MSHQPLSCLTEKGDSSCETPGNGPSNMVHPNL) form a disordered region. A compositionally biased stretch (polar residues) spans 16–25 (SCETPGNGPS). Residues 38–181 (EELLQQMKEL…VSELQLKLNS (144 aa)) are a coiled coil. The segment at 58–220 (MKLNNQAMKG…GPTRTDSISM (163 aa)) is interaction with Rab8. The LIR signature appears at 187–192 (DSFVEI). Phosphoserine occurs at positions 188 and 209. Disordered stretches follow at residues 200 to 220 (EGAM…SISM) and 269 to 299 (FEKK…PESV). Positions 244-512 (CLREGNQKVE…LLKENNDFED (269 aa)) form a coiled coil. Ser346 carries the phosphoserine modification. The interval 415-585 (TKQQAEKVDK…LQIHVMDCII (171 aa)) is interaction with HD. Residues 416–525 (KQQAEKVDKV…RQSLMEMQCR (110 aa)) are interaction with MYO6. The UBAN motif lies at 478–483 (DFHAER). Phosphoserine is present on Ser531. The CCHC NOA-type zinc finger occupies 555 to 585 (PRSIPIHSCPKCGEVLPDIDTLQIHVMDCII). Residues Cys563, Cys566, His579, and Cys583 each coordinate Zn(2+).

Self-associates. Interacts with HD. Interacts with GTF3A. Interacts with MYO6. Interacts (via UBAN) with ubiquitinated TFRC. Interacts with GTP-bound Rab8 (RAB8A and/or RAB8B). Interacts with TBC1D17. Interacts with TBK1. Interacts with TRAF3. Binds to linear ubiquitin chains. Interacts with LC3 family members MAP1LC3A, MAP1LC3B, GABARAP, GABARAPL1 and GABARAPL2; OPTN phosphorylation increases the association (at least with MAP1LC3B). Interacts with RAB12; the interaction may be indirect. Interacts with TBK1; this interaction leads to the Golgi localization of TBK1 and its subsequent activation. Interacts with palmitoyltransferase ZDHHC17/HIP14; the interaction does not lead to palmitoylation of OPTN. Interacts with CYLD. Interacts with TOM1; the interaction is indirect and is mediated by MYO6, which acts as a bridge between TOM1 and OPTN. Interacts with USP12; the interaction is independent of USP12 deubiquitinase activity and may be involved in regulation of autophagic flux. Post-translationally, phosphorylated by TBK1, leading to restrict bacterial proliferation in case of infection.

The protein resides in the cytoplasm. Its subcellular location is the perinuclear region. It localises to the golgi apparatus. The protein localises to the trans-Golgi network. It is found in the cytoplasmic vesicle. The protein resides in the autophagosome. Its subcellular location is the recycling endosome. Plays an important role in the maintenance of the Golgi complex, in membrane trafficking, in exocytosis, through its interaction with myosin VI and Rab8. Links myosin VI to the Golgi complex and plays an important role in Golgi ribbon formation. Negatively regulates the induction of IFNB in response to RNA virus infection. Plays a neuroprotective role in the eye and optic nerve. Probably part of the TNF-alpha signaling pathway that can shift the equilibrium toward induction of cell death. May act by regulating membrane trafficking and cellular morphogenesis via a complex that contains Rab8 and huntingtin (HD). Mediates the interaction of Rab8 with the probable GTPase-activating protein TBC1D17 during Rab8-mediated endocytic trafficking, such as that of transferrin receptor (TFRC/TfR); regulates Rab8 recruitment to tubules emanating from the endocytic recycling compartment. Autophagy receptor that interacts directly with both the cargo to become degraded and an autophagy modifier of the MAP1 LC3 family; targets ubiquitin-coated bacteria (xenophagy) and appears to function in the same pathway as SQSTM1 and CALCOCO2/NDP52. This Rattus norvegicus (Rat) protein is Optineurin (Optn).